Here is a 68-residue protein sequence, read N- to C-terminus: UPF0337 protein RB10934 (68 aa).

This sequence belongs to the UPF0337 (CsbD) family.

This Rhodopirellula baltica (strain DSM 10527 / NCIMB 13988 / SH1) protein is UPF0337 protein RB10934.